A 35-amino-acid polypeptide reads, in one-letter code: Photosystem II reaction center protein M (35 aa).

Residues 7-27 form a helical membrane-spanning segment; that stretch reads GFIASILFVLVPTVFLLILFI.

The protein belongs to the PsbM family. In terms of assembly, PSII is composed of 1 copy each of membrane proteins PsbA, PsbB, PsbC, PsbD, PsbE, PsbF, PsbH, PsbI, PsbJ, PsbK, PsbL, PsbM, PsbT, PsbX, PsbY, PsbZ, Psb30/Ycf12, peripheral proteins PsbO, CyanoQ (PsbQ), PsbU, PsbV and a large number of cofactors. It forms dimeric complexes.

It localises to the cellular thylakoid membrane. Functionally, one of the components of the core complex of photosystem II (PSII). PSII is a light-driven water:plastoquinone oxidoreductase that uses light energy to abstract electrons from H(2)O, generating O(2) and a proton gradient subsequently used for ATP formation. It consists of a core antenna complex that captures photons, and an electron transfer chain that converts photonic excitation into a charge separation. This subunit is found at the monomer-monomer interface. This chain is Photosystem II reaction center protein M, found in Microcystis aeruginosa (strain NIES-843 / IAM M-2473).